A 165-amino-acid polypeptide reads, in one-letter code: Cyanate hydratase (165 aa).

Catalysis depends on residues R106, E109, and S132.

The protein belongs to the cyanase family.

The catalysed reaction is cyanate + hydrogencarbonate + 3 H(+) = NH4(+) + 2 CO2. Its function is as follows. Catalyzes the reaction of cyanate with bicarbonate to produce ammonia and carbon dioxide. This chain is Cyanate hydratase, found in Laccaria bicolor (strain S238N-H82 / ATCC MYA-4686) (Bicoloured deceiver).